The following is a 606-amino-acid chain: Alpha-1,2-mannosyltransferase MNN23 (606 aa).

Residues 1 to 14 (MSINFLSIPRNRFK) are Cytoplasmic-facing. Residues 15 to 35 (AIGVLSVTCILIYVILHSSII) form a helical membrane-spanning segment. At 36-606 (TTDFDVSDYG…QVAWLSKSQN (571 aa)) the chain is on the extracellular side. The tract at residues 59–86 (DNGENLKDPQPELDNDKGNGETDTTTSN) is disordered. Residues 62 to 78 (ENLKDPQPELDNDKGNG) show a composition bias toward basic and acidic residues.

This sequence belongs to the MNN1/MNT family.

The protein resides in the golgi apparatus membrane. The protein operates within protein modification; protein glycosylation. In terms of biological role, alpha-1,2-mannosyltransferase required for cell wall integrity. Responsible for addition of the first alpha-1,2-linked mannose to form the branches on the mannan backbone of oligosaccharides. Addition of alpha-1,2-mannose is required for stabilization of the alpha-1,6-mannose backbone and hence regulates mannan fibril length; and is important for both immune recognition and virulence. The polypeptide is Alpha-1,2-mannosyltransferase MNN23 (MNN23) (Candida albicans (strain SC5314 / ATCC MYA-2876) (Yeast)).